The sequence spans 267 residues: UDP-glucose:undecaprenyl-phosphate glucose-1-phosphate transferase (267 aa).

Residues 83-103 (VAAALLTALFAPLLLLAALAI) traverse the membrane as a helical segment.

Belongs to the bacterial sugar transferase family.

Its subcellular location is the cell membrane. The catalysed reaction is di-trans,octa-cis-undecaprenyl phosphate + UDP-alpha-D-glucose = alpha-D-glucosyl di-trans,octa-cis-undecaprenyl diphosphate + UMP. In terms of biological role, is likely the initiating enzyme for holdfast polysaccharide synthesis. Catalyzes the transfer of the glucose-1-phosphate moiety from UDP-Glc onto the carrier lipid undecaprenyl phosphate (C55-P), forming a phosphoanhydride bond yielding to glucosyl-pyrophosphoryl-undecaprenol (Glc-PP-C55). Also possesses a weak galactose-1-P transferase activity. In Caulobacter vibrioides (strain ATCC 19089 / CIP 103742 / CB 15) (Caulobacter crescentus), this protein is UDP-glucose:undecaprenyl-phosphate glucose-1-phosphate transferase (pssY).